The following is a 204-amino-acid chain: ATP-dependent Clp protease proteolytic subunit (204 aa).

The Nucleophile role is filled by serine 101. Histidine 126 is a catalytic residue.

This sequence belongs to the peptidase S14 family. In terms of assembly, component of the chloroplastic Clp protease core complex.

The protein resides in the plastid. The protein localises to the chloroplast stroma. It catalyses the reaction Hydrolysis of proteins to small peptides in the presence of ATP and magnesium. alpha-casein is the usual test substrate. In the absence of ATP, only oligopeptides shorter than five residues are hydrolyzed (such as succinyl-Leu-Tyr-|-NHMec, and Leu-Tyr-Leu-|-Tyr-Trp, in which cleavage of the -Tyr-|-Leu- and -Tyr-|-Trp bonds also occurs).. Its function is as follows. Cleaves peptides in various proteins in a process that requires ATP hydrolysis. Has a chymotrypsin-like activity. Plays a major role in the degradation of misfolded proteins. This is ATP-dependent Clp protease proteolytic subunit from Anthoceros angustus (Hornwort).